The following is a 167-amino-acid chain: Inclusion membrane protein G (167 aa).

2 consecutive transmembrane segments (helical) span residues 37–57 (LSLF…AVLF) and 63–83 (VLPY…AVIV). 2 disordered regions span residues 97–136 (KRSP…STFG) and 148–167 (VSGA…SHSF). Residues 122–134 (ESASPQASPTSST) are compositionally biased toward low complexity. The Phosphorylation-dependent binding motif signature appears at 161-166 (RSRSHS). A Phosphoserine modification is found at Ser-166.

In terms of processing, phosphorylated by chlamydial kinase Pnk1.

The protein localises to the secreted. It localises to the host vacuole. Its subcellular location is the host pathogen-containing vacuole. It is found in the host pathogen-containing vacuole membrane. Inclusion membrane protein probably involved in early modification events of the chlamydial inclusion. Binds to the host cell 14-3-3 beta (YWHAB); phosphorylation of Ser-166 is probably required. This chain is Inclusion membrane protein G (incG), found in Chlamydia trachomatis serovar D (strain ATCC VR-885 / DSM 19411 / UW-3/Cx).